We begin with the raw amino-acid sequence, 282 residues long: E3 ubiquitin-protein ligase SIAH1 (282 aa).

Residues methionine 1–proline 17 are compositionally biased toward polar residues. Residues methionine 1 to valine 22 are disordered. Serine 19 bears the Phosphoserine; by ATM and ATR mark. The segment at cysteine 41–arginine 76 adopts an RING-type zinc-finger fold. The SBD stretch occupies residues valine 90–cysteine 282. An SIAH-type zinc finger spans residues serine 93–lysine 153. Zn(2+)-binding residues include cysteine 98, cysteine 105, histidine 117, cysteine 121, cysteine 128, cysteine 135, histidine 147, and histidine 152.

The protein belongs to the SINA (Seven in absentia) family. Homodimer. Interacts with group 1 glutamate receptors GRM1 and GRM5. Interacts with DAB1, which may inhibit its activity. Interacts with UBE2E2. Interacts with PEG3. Interacts with GAPDH; leading to stabilize SIAH1. Component of some large E3 complex composed of UBE2D1, SIAH1, CACYBP/SIP, SKP1, APC and TBL1X. Interacts with UBE2I. Interacts with alpha-tubulin. Interacts with PEG10, which may inhibit its activity. Interacts with KHDRBS3. Interacts with SNCAIP. Interacts with HIPK2; the interaction is promoted by DAZAP2 and results in SIAH1-mediated ubiquitination and subsequent proteasomal degradation of HIPK2. Interacts with DAZAP2; the interaction is decreased following phosphorylation of DAZAP2 by HIPK2. Interacts with Bassoon/BSN and Piccolo/PLCO; these interactions negatively regulate SIAH1 E3 ligase activity. Interacts with DCC. Interacts with AXIN1; catalyzes AXIN1 ubiquitination and subsequent proteasome-mediated ubiquitin-dependent degradation. In terms of processing, phosphorylated on Ser-19 by ATM and ATR. This phosphorylation disrupts SIAH1 interaction with HIPK2, and subsequent proteasomal degradation of HIPK2. As to expression, widely expressed at a low level. Down-regulated in advanced hepatocellular carcinomas.

The protein localises to the cytoplasm. Its subcellular location is the nucleus. It catalyses the reaction S-ubiquitinyl-[E2 ubiquitin-conjugating enzyme]-L-cysteine + [acceptor protein]-L-lysine = [E2 ubiquitin-conjugating enzyme]-L-cysteine + N(6)-ubiquitinyl-[acceptor protein]-L-lysine.. It functions in the pathway protein modification; protein ubiquitination. Its activity is regulated as follows. Inhibited by interaction with SNCAIP (isoform 2, but not isoform 1). May be inhibited by interaction with PEG10. Its function is as follows. E3 ubiquitin-protein ligase that mediates ubiquitination and subsequent proteasomal degradation of target proteins. E3 ubiquitin ligases accept ubiquitin from an E2 ubiquitin-conjugating enzyme in the form of a thioester and then directly transfers the ubiquitin to targeted substrates. Mediates E3 ubiquitin ligase activity either through direct binding to substrates or by functioning as the essential RING domain subunit of larger E3 complexes. Triggers the ubiquitin-mediated degradation of many substrates, including proteins involved in transcription regulation (ELL2, MYB, POU2AF1, PML and RBBP8), a cell surface receptor (DCC), the cell-surface receptor-type tyrosine kinase FLT3, the cytoplasmic signal transduction molecules (KLF10/TIEG1 and NUMB), an antiapoptotic protein (BAG1), a microtubule motor protein (KIF22), a protein involved in synaptic vesicle function in neurons (SYP), a structural protein (CTNNB1) and SNCAIP. Confers constitutive instability to HIPK2 through proteasomal degradation. It is thereby involved in many cellular processes such as apoptosis, tumor suppression, cell cycle, axon guidance, transcription regulation, spermatogenesis and TNF-alpha signaling. Has some overlapping function with SIAH2. Induces apoptosis in cooperation with PEG3. Upon nitric oxid (NO) generation that follows apoptotic stimulation, interacts with S-nitrosylated GAPDH, mediating the translocation of GAPDH to the nucleus. GAPDH acts as a stabilizer of SIAH1, facilitating the degradation of nuclear proteins. Mediates ubiquitination and degradation of EGLN2 and EGLN3 in response to the unfolded protein response (UPR), leading to their degradation and subsequent stabilization of ATF4. Also part of the Wnt signaling pathway in which it mediates the Wnt-induced ubiquitin-mediated proteasomal degradation of AXIN1. This Homo sapiens (Human) protein is E3 ubiquitin-protein ligase SIAH1 (SIAH1).